The chain runs to 695 residues: Phenoloxidase subunit 2 (695 aa).

Residues His-215, His-219, and His-245 each coordinate Cu cation. The Proton acceptor role is filled by Glu-353. Residues His-368, His-372, and His-408 each coordinate Cu cation. Disulfide bonds link Cys-586–Cys-630 and Cys-588–Cys-637.

Heterodimer. Forms a complex with an interleukin 1-like protein as a consequence of a host defense response. It depends on Cu(2+) as a cofactor. In terms of processing, the N-terminus is blocked. As to expression, synthesized by oenocytoids, a type of hemocyte, and released into the hemolymph plasma.

Its subcellular location is the secreted. The enzyme catalyses 2 L-dopa + O2 = 2 L-dopaquinone + 2 H2O. It catalyses the reaction L-tyrosine + O2 = L-dopaquinone + H2O. With respect to regulation, activated by immulectin and lipopolysaccharide. Functionally, this is a copper-containing oxidase that functions in the formation of pigments such as melanins and other polyphenolic compounds. Catalyzes the rate-limiting conversions of tyrosine to DOPA, DOPA to DOPA-quinone and possibly 5,6 dihydroxyindole to indole-5'6 quinone. Binds to the surface of hemocytes and is involved in hemocyte melanization. In Manduca sexta (Tobacco hawkmoth), this protein is Phenoloxidase subunit 2.